Here is a 403-residue protein sequence, read N- to C-terminus: MKSVEEQLALIKRGADELLVEAELVEKLKRGQPLRIKAGFDPTAPDLHLGHTVLINKLRQFQDLGHQIIFLIGDFTGMIGDPSGKSATRPPLTREQVLDYAETYKSQVFKILDPAKTEVAFNSTWMDQLSPADFIRLSSQYTVARMLERDDFDKRYKSNQSIAIHEFLYPLVQGYDSVALKADVELGGTDQKFNLLMGRELQRAYGQEPQCILTMPLLEGLDGVKKMSKSLGNYVGIQEAPGIMYSKLVSIPDSLMWRYFELLSFRSMEEIDGLKADCEAGANPRDIKIKLAEELVARFHGEEAAANAHRSAGNRMKEGELPDDLPELSVAAAEDMPISAVLNKAGLVKNAAVARDLLASGGVRIDGEVVDRSFVFKLGTTHVCQAGKKAFGRVTLVSEESSN.

Residues 42–51 (PTAPDLHLGH) carry the 'HIGH' region motif. Positions 226–230 (KMSKS) match the 'KMSKS' region motif. K229 is an ATP binding site. Residues 336–396 (MPISAVLNKA…GKKAFGRVTL (61 aa)) form the S4 RNA-binding domain.

This sequence belongs to the class-I aminoacyl-tRNA synthetase family. TyrS type 2 subfamily. As to quaternary structure, homodimer.

The protein localises to the cytoplasm. The catalysed reaction is tRNA(Tyr) + L-tyrosine + ATP = L-tyrosyl-tRNA(Tyr) + AMP + diphosphate + H(+). Functionally, catalyzes the attachment of tyrosine to tRNA(Tyr) in a two-step reaction: tyrosine is first activated by ATP to form Tyr-AMP and then transferred to the acceptor end of tRNA(Tyr). This is Tyrosine--tRNA ligase from Pseudomonas syringae pv. syringae (strain B728a).